A 139-amino-acid polypeptide reads, in one-letter code: Transcription antitermination protein NusB (139 aa).

Belongs to the NusB family.

In terms of biological role, involved in transcription antitermination. Required for transcription of ribosomal RNA (rRNA) genes. Binds specifically to the boxA antiterminator sequence of the ribosomal RNA (rrn) operons. The chain is Transcription antitermination protein NusB from Natranaerobius thermophilus (strain ATCC BAA-1301 / DSM 18059 / JW/NM-WN-LF).